The sequence spans 277 residues: Soluble NSF attachment protein 29 (277 aa).

Residues 1-11 show a composition bias toward basic and acidic residues; the sequence is MSRNPFDDDYR. Disordered stretches follow at residues 1–30, 49–73, and 117–170; these read MSRN…MGHY, ESLD…STAQ, and KFTK…ESSR. Over residues 14–28 the composition is skewed to polar residues; sequence AASSTMPVKSYTTMG. One can recognise a t-SNARE coiled-coil homology 1 domain in the interval 44–106; that stretch reads EKTLQESLDS…QMTQRNLNSL (63 aa). The segment covering 49–65 has biased composition (basic and acidic residues); it reads ESLDSTERSRRHLENSE. Residues 134 to 170 are compositionally biased toward polar residues; it reads SKSASRLSETATNLSSGGGSATFSGPSGQRTLTESSR. Positions 179-241 constitute a t-SNARE coiled-coil homology 2 domain; sequence EAMDNQIDEN…RDQDKQMQKI (63 aa).

This sequence belongs to the SNAP-25 family.

Its subcellular location is the synapse. It localises to the synaptosome. Its function is as follows. SNAREs, soluble N-ethylmaleimide-sensitive factor-attachment protein receptors, are essential proteins for fusion of cellular membranes. SNAREs localized on opposing membranes assemble to form a trans-SNARE complex, an extended, parallel four alpha-helical bundle that drives membrane fusion. Plays a role in the processing and secretion of the aspartic protease hrg-7 from the intestine. This is Soluble NSF attachment protein 29 from Caenorhabditis elegans.